The primary structure comprises 368 residues: Phospho-N-acetylmuramoyl-pentapeptide-transferase (368 aa).

10 helical membrane passes run 34–54, 79–99, 102–122, 140–160, 176–196, 207–227, 247–267, 271–291, 296–316, and 345–365; these read GAVVTGALFVFLFGPWIIDHL, TPTMGGLMILSGLVVSTVLWA, LNPYVWIVLAVTLGFGFVGFY, ARLLIEAAIALVACYALVRLG, LVIKFGWMYVIFGAFVIVGAG, GLAIVPVMIASASFGLIAYLA, LAVLCGAVLGAGLGFLWFNAP, IFMGDTGSLALGGMLGSIAVA, IVLAVIGGLFVLEAVSVIVQV, and QIVIRFWIISVMLALVGLSTL.

The protein belongs to the glycosyltransferase 4 family. MraY subfamily. Mg(2+) serves as cofactor.

The protein resides in the cell inner membrane. It carries out the reaction UDP-N-acetyl-alpha-D-muramoyl-L-alanyl-gamma-D-glutamyl-meso-2,6-diaminopimeloyl-D-alanyl-D-alanine + di-trans,octa-cis-undecaprenyl phosphate = di-trans,octa-cis-undecaprenyl diphospho-N-acetyl-alpha-D-muramoyl-L-alanyl-D-glutamyl-meso-2,6-diaminopimeloyl-D-alanyl-D-alanine + UMP. Its pathway is cell wall biogenesis; peptidoglycan biosynthesis. Functionally, catalyzes the initial step of the lipid cycle reactions in the biosynthesis of the cell wall peptidoglycan: transfers peptidoglycan precursor phospho-MurNAc-pentapeptide from UDP-MurNAc-pentapeptide onto the lipid carrier undecaprenyl phosphate, yielding undecaprenyl-pyrophosphoryl-MurNAc-pentapeptide, known as lipid I. The chain is Phospho-N-acetylmuramoyl-pentapeptide-transferase from Bradyrhizobium sp. (strain ORS 278).